We begin with the raw amino-acid sequence, 257 residues long: Homeobox protein goosecoid (257 aa).

The segment at residues 160–219 is a DNA-binding region (homeobox); sequence KRRHRTIFTDEQLEALENLFQETKYPDVGTREQLARKVHLREEKVEVWFKNRRAKWRRQK. A disordered region spans residues 213–257; the sequence is AKWRRQKRSSSEESENAEKWNKTSSSKASPEKREEEGKSDLDSDS. A compositionally biased stretch (basic and acidic residues) spans 241-257; the sequence is SPEKREEEGKSDLDSDS.

This sequence belongs to the paired homeobox family. Bicoid subfamily.

The protein resides in the nucleus. Its function is as follows. Regulates chordin (CHRD). May play a role in spatial programing within discrete embryonic fields or lineage compartments during organogenesis. In concert with NKX3-2, plays a role in defining the structural components of the middle ear; required for the development of the entire tympanic ring. Probably involved in the regulatory networks that define neural crest cell fate specification and determine mesoderm cell lineages in mammals. The chain is Homeobox protein goosecoid (GSC) from Gorilla gorilla gorilla (Western lowland gorilla).